Reading from the N-terminus, the 351-residue chain is Dihydroorotate dehydrogenase (quinone) (351 aa).

Residues 65 to 69 and Thr-89 contribute to the FMN site; that span reads AGLDK. Lys-69 contacts substrate. Residue 114 to 118 coordinates substrate; the sequence is NRLGF. FMN is bound by residues Asn-150 and Asn-183. Asn-183 contributes to the substrate binding site. The Nucleophile role is filled by Ser-186. Asn-188 is a binding site for substrate. FMN-binding residues include Lys-228 and Thr-256. 257–258 contacts substrate; sequence NT. FMN-binding positions include Gly-279, Gly-308, and 329-330; that span reads YT.

The protein belongs to the dihydroorotate dehydrogenase family. Type 2 subfamily. In terms of assembly, monomer. The cofactor is FMN.

Its subcellular location is the cell membrane. The catalysed reaction is (S)-dihydroorotate + a quinone = orotate + a quinol. It participates in pyrimidine metabolism; UMP biosynthesis via de novo pathway; orotate from (S)-dihydroorotate (quinone route): step 1/1. Its function is as follows. Catalyzes the conversion of dihydroorotate to orotate with quinone as electron acceptor. This is Dihydroorotate dehydrogenase (quinone) from Acidovorax sp. (strain JS42).